The chain runs to 259 residues: Eukaryotic translation initiation factor 3 subunit J (259 aa).

Over residues 1 to 12 (MAAAAAAAAGDS) the composition is skewed to low complexity. Residues 1–70 (MAAAAAAAAG…KEEAEVKPEV (70 aa)) form a sufficient for interaction with EIF3B region. Positions 1–111 (MAAAAAAAAG…EPEEPKVLTP (111 aa)) are disordered. A phosphoserine mark is found at Ser12, Ser14, and Ser21. Over residues 41–60 (EGEDEDEDVKDNWDDDDDEK) the composition is skewed to acidic residues. Positions 61–107 (KEEAEVKPEVKISEKKKIAEKIKEKERQQKKRQEEIKKRLEEPEEPK) are enriched in basic and acidic residues. The stretch at 71–136 (KISEKKKIAE…ESDLELAKET (66 aa)) forms a coiled coil. Lys107 is covalently cross-linked (Glycyl lysine isopeptide (Lys-Gly) (interchain with G-Cter in SUMO2)). Thr110 is modified (phosphothreonine). Ser128 carries the phosphoserine modification. Positions 218 to 247 (SKAKKKKKGVVPGGGLKATMKDDLADYGGY) are disordered. A promotes stable association with the 40S ribosome region spans residues 244–259 (YGGYDGGYVQDYEDFM). Tyr255 bears the Phosphotyrosine mark.

It belongs to the eIF-3 subunit J family. As to quaternary structure, component of the eukaryotic translation initiation factor 3 (eIF-3) complex, which is composed of 13 subunits: EIF3A, EIF3B, EIF3C, EIF3D, EIF3E, EIF3F, EIF3G, EIF3H, EIF3I, EIF3J, EIF3K, EIF3L and EIF3M. The eIF-3 complex appears to include 3 stable modules: module A is composed of EIF3A, EIF3B, EIF3G and EIF3I; module B is composed of EIF3F, EIF3H, and EIF3M; and module C is composed of EIF3C, EIF3D, EIF3E, EIF3K and EIF3L. EIF3C of module C binds EIF3B of module A and EIF3H of module B, thereby linking the three modules. EIF3J is a labile subunit that binds to the eIF-3 complex via EIF3B. The eIF-3 complex interacts with RPS6KB1 under conditions of nutrient depletion. Mitogenic stimulation leads to binding and activation of a complex composed of MTOR and RPTOR, leading to phosphorylation and release of RPS6KB1 and binding of EIF4B to eIF-3. Phosphorylated. Phosphorylation is enhanced upon serum stimulation.

It localises to the cytoplasm. Component of the eukaryotic translation initiation factor 3 (eIF-3) complex, which is required for several steps in the initiation of protein synthesis. The eIF-3 complex associates with the 40S ribosome and facilitates the recruitment of eIF-1, eIF-1A, eIF-2:GTP:methionyl-tRNAi and eIF-5 to form the 43S pre-initiation complex (43S PIC). The eIF-3 complex stimulates mRNA recruitment to the 43S PIC and scanning of the mRNA for AUG recognition. The eIF-3 complex is also required for disassembly and recycling of post-termination ribosomal complexes and subsequently prevents premature joining of the 40S and 60S ribosomal subunits prior to initiation. The eIF-3 complex specifically targets and initiates translation of a subset of mRNAs involved in cell proliferation, including cell cycling, differentiation and apoptosis, and uses different modes of RNA stem-loop binding to exert either translational activation or repression. This subunit binds directly within the mRNA entry channel of the 40S ribosome to the aminoacyl (A) site. It may regulate the interaction between the 43S PIC and mRNA. The polypeptide is Eukaryotic translation initiation factor 3 subunit J (Pongo abelii (Sumatran orangutan)).